Reading from the N-terminus, the 244-residue chain is Carbonic anhydrase (244 aa).

Positions 1–19 (MKGKFSIALMLSACFSASA) are cleaved as a signal peptide. An Alpha-carbonic anhydrase domain is found at 23-244 (VHWGYEGSGD…QPLNGRIIIH (222 aa)). A disulfide bond links cysteine 46 and cysteine 199. Histidine 84 serves as the catalytic Proton acceptor. The Zn(2+) site is built by histidine 109, histidine 111, and histidine 128. 195 to 196 (TT) is a binding site for substrate.

The protein belongs to the alpha-carbonic anhydrase family. Zn(2+) is required as a cofactor.

The protein localises to the periplasm. It catalyses the reaction hydrogencarbonate + H(+) = CO2 + H2O. In terms of biological role, reversible hydration of carbon dioxide. The sequence is that of Carbonic anhydrase (cah) from Pectobacterium atrosepticum (strain SCRI 1043 / ATCC BAA-672) (Erwinia carotovora subsp. atroseptica).